A 523-amino-acid chain; its full sequence is MSLVSQNARHCSAEITADYGDGRGEIQATNASGSPTSMLVVDAPQCPQAPINSQCVNTSQAVQDPNDLEVLIDEQSRRLGALRVHDPLEDRSIALVNFMRMKSQTEGSIQQSEMLEFLREYSDQFPEILRRASAHLDQVFGLNLRVIDPQADTYNLVSKRGFQITDRIAESLDMPKASLLALVLGHILLNGNRAREASIWDLLLKVDMWDKPQRINNLFGNTRNLLTTDFVCMRFLEYWPVYGTNPLEFEFLWGSRAHREITKMEALKFVSDAHDEEPWSWPEEYNKALEGDKTKERSLTAGLEFWSEDTMNDKANDLVQLAISVTEEMLPIHQDELLAHTGKEFEDVFPNILNRATLILDMFYGLSLIEVDTSEHIYLLVQQPESEEEQVMLESLGRPTQEYVMPILGLIFLMGNRVKEANVWNLLRRFSVDVGRKHSITRKLMRQRYLECRPLSYSNPVEYELLWGPRAHHETIKMKVLEYMARLYRKRPQNWPEQYREAVEDEEARAKSEATIMFFLDPT.

MAGE domains lie at 88-288 (LEDR…YNKA) and 311-502 (MNDK…YREA).

The polypeptide is Melanoma-associated antigen E2 (MAGEE2) (Homo sapiens (Human)).